Reading from the N-terminus, the 1002-residue chain is MFCKQKHKTRKKPAVNALMADLSDLSDDDLESLLENNVNRSVNQTVTRHRIPVQRDLFMNVLPNQQTFYEETHTDVSYGPTHHQLNEENLDEYIYPTNYEVRQYQYDIVRCALFENVLCAIPTGTGKTFIASTVMLNYYRWTKSSKIIFTAPTRPLVAQQIKACLGITGIPYSDTAILLDKSRKNREEIWQQKRVFFTTPQVVENDLKRGVLNPKDVVLLVIDEAHRARGNYAYVELTKFIDRFNTSYRLLALTATPAADLEGVQEVVNNLHISKIELRTEDSLDVARYMMRRDREMIEIGLIPEIEEVVEQIGIAIAPVLQEAIQLGIYESCEPHQINAFVAMQQSQKIILNPSIPEGLKWKNFFILQLLSQVGHMYRRLRIYGLRAFYNYFQNKYTEFTTKYSMKKSTNKTAANFFYSPILKTVIDKCKRRLEEPEFYSHEKLEYLNNELADFFTMAPSDSRAIIFTELRESALEIVKSIDILNDGALRPHIFIGQAKGKEHFDEETYIRKNKPKGRTKAARLRRIEEENRVEEEKKRQKEQAKLERTGRRTGSSEEAQLSGMNQKQQKKVISDFKKGIYNVLVCTSIGEEGLDIGEVDLIICFDSTSSPIKNIQRMGRTGRKRDGRIVLLFSGNEKFKFEQAMNDYENLQTAITHNALEYTKSDRILPPNVQPKCEEKFIIISNENDEVNKLEDSDEVIKYATQAMLGKLKTKKKEPKPKKTTAKAKKSSDKTFFMPDNVKEGFTSASSLLNKYTINEFGEKISLTPSVSKKAIKPKKEWNMLDEIEYDSVEISPAKSQVEQPSQPHKPTTTQGILTPDETTNHIPSASQGSSVQTDSHTVQEPVLKKLKLAHQIEDPSTSIEYYSGYELVPQYGATDSAQMLTMQEQRHFLKKYVPDTVHWSIAPDLAKSKTRKIRHVPKIEEILNTCQDMHTNTREKIIGMNRTNALARSIGYNRSVGMELEVMLPSIVVPNETITNAKNMTDLLEDEDGLSDFLSD.

Positions 108-275 (IVRCALFENV…EVVNNLHISK (168 aa)) constitute a Helicase ATP-binding domain. Residue 121–128 (IPTGTGKT) participates in ATP binding. A DEAH box motif is present at residues 223–226 (DEAH). Residues 506-669 (DEETYIRKNK…ALEYTKSDRI (164 aa)) enclose the Helicase C-terminal domain. Residues 531-551 (ENRVEEEKKRQKEQAKLERTG) are compositionally biased toward basic and acidic residues. 2 disordered regions span residues 531 to 569 (ENRVEEEKKRQKEQAKLERTGRRTGSSEEAQLSGMNQKQ) and 799 to 843 (AKSQ…DSHT). The span at 553–568 (RTGSSEEAQLSGMNQK) shows a compositional bias: polar residues.

The protein belongs to the DEAD box helicase family. DEAH subfamily. FANCM sub-subfamily. As to quaternary structure, interacts with the MHF histone-fold complex to form the FANCM-MHF complex.

Its subcellular location is the nucleus. It catalyses the reaction ATP + H2O = ADP + phosphate + H(+). In terms of biological role, ATP-dependent DNA helicase involved in DNA damage repair by homologous recombination and in genome maintenance. Capable of unwinding D-loops. Plays a role in limiting crossover recombinants during mitotic DNA double-strand break (DSB) repair. Component of a FANCM-MHF complex which promotes gene conversion at blocked replication forks, probably by reversal of the stalled fork. The protein is ATP-dependent DNA helicase MPH1 of Kluyveromyces lactis (strain ATCC 8585 / CBS 2359 / DSM 70799 / NBRC 1267 / NRRL Y-1140 / WM37) (Yeast).